The primary structure comprises 382 residues: Probable trehalose-phosphate phosphatase 2 (382 aa).

The protein belongs to the trehalose phosphatase family. The cofactor is a divalent metal cation. As to expression, expressed in roots and shoots.

The enzyme catalyses alpha,alpha-trehalose 6-phosphate + H2O = alpha,alpha-trehalose + phosphate. It functions in the pathway glycan biosynthesis; trehalose biosynthesis. In terms of biological role, removes the phosphate from trehalose 6-phosphate to produce free trehalose. Trehalose accumulation in plant may improve abiotic stress tolerance. This is Probable trehalose-phosphate phosphatase 2 (TPP2) from Oryza sativa subsp. japonica (Rice).